Here is a 165-residue protein sequence, read N- to C-terminus: Growth arrest and DNA damage-inducible protein GADD45 alpha (165 aa).

A Phosphothreonine modification is found at Thr-2.

The protein belongs to the GADD45 family. In terms of assembly, interacts with AURKA, PCNA, GADD45GIP1 and MAPK14.

It is found in the nucleus. In terms of biological role, might affect PCNA interaction with some CDK (cell division protein kinase) complexes; stimulates DNA excision repair in vitro and inhibits entry of cells into S phase. In T-cells, functions as a regulator of p38 MAPKs by inhibiting p88 phosphorylation and activity. This is Growth arrest and DNA damage-inducible protein GADD45 alpha (GADD45A) from Felis catus (Cat).